The following is a 132-amino-acid chain: MSMTDNVADMLTRIRNAYKSKLISVSFPSSKIKTSILDVLQKEGYIKDYITTQKNNISYTEVALKYSVNGDASICEIHRVSKPGKRVYSAIKDLKGYYNNMGIYILSTPYGVMSDREAHIKNVGGEVICKVF.

The protein belongs to the universal ribosomal protein uS8 family. Part of the 30S ribosomal subunit. Contacts proteins S5 and S12.

Functionally, one of the primary rRNA binding proteins, it binds directly to 16S rRNA central domain where it helps coordinate assembly of the platform of the 30S subunit. This is Small ribosomal subunit protein uS8 from Rickettsia rickettsii (strain Sheila Smith).